A 119-amino-acid chain; its full sequence is Large ribosomal subunit protein bL20 (119 aa).

The protein belongs to the bacterial ribosomal protein bL20 family.

Binds directly to 23S ribosomal RNA and is necessary for the in vitro assembly process of the 50S ribosomal subunit. It is not involved in the protein synthesizing functions of that subunit. The polypeptide is Large ribosomal subunit protein bL20 (Aromatoleum aromaticum (strain DSM 19018 / LMG 30748 / EbN1) (Azoarcus sp. (strain EbN1))).